The following is a 363-amino-acid chain: S-methylmethionine--homocysteine S-methyltransferase BHMT2 (363 aa).

One can recognise a Hcy-binding domain in the interval 11–305 (KGILERLDSG…YHIRAIAEEL (295 aa)). Zn(2+)-binding residues include Cys208, Cys290, and Cys291. Ser321 carries the phosphoserine modification.

As to quaternary structure, homotetramer. Requires Zn(2+) as cofactor. Expressed in fetal heart, lung, liver, kidney and eye.

The catalysed reaction is S-methyl-L-methionine + L-homocysteine = 2 L-methionine + H(+). The protein operates within amino-acid biosynthesis; L-methionine biosynthesis via de novo pathway; L-methionine from L-homocysteine (BhmT route): step 1/1. In terms of biological role, involved in the regulation of homocysteine metabolism. Converts homocysteine to methionine using S-methylmethionine (SMM) as a methyl donor. This chain is S-methylmethionine--homocysteine S-methyltransferase BHMT2 (Bhmt2), found in Mus musculus (Mouse).